A 379-amino-acid polypeptide reads, in one-letter code: Chaperone protein DnaJ (379 aa).

The 65-residue stretch at 5-69 (EFYDRLGVSK…QKRAAYDQYG (65 aa)) folds into the J domain. The segment at 135-217 (GAEKEVSYNR…CHGTGHEKKT (83 aa)) adopts a CR-type zinc-finger fold. Zn(2+) contacts are provided by C148, C151, C165, C168, C191, C194, C205, and C208. CXXCXGXG motif repeat units follow at residues 148 to 155 (CHTCSGSG), 165 to 172 (CQKCHGSG), 191 to 198 (CDVCQGSG), and 205 to 212 (CPTCHGTG).

This sequence belongs to the DnaJ family. Homodimer. The cofactor is Zn(2+).

The protein resides in the cytoplasm. In terms of biological role, participates actively in the response to hyperosmotic and heat shock by preventing the aggregation of stress-denatured proteins and by disaggregating proteins, also in an autonomous, DnaK-independent fashion. Unfolded proteins bind initially to DnaJ; upon interaction with the DnaJ-bound protein, DnaK hydrolyzes its bound ATP, resulting in the formation of a stable complex. GrpE releases ADP from DnaK; ATP binding to DnaK triggers the release of the substrate protein, thus completing the reaction cycle. Several rounds of ATP-dependent interactions between DnaJ, DnaK and GrpE are required for fully efficient folding. Also involved, together with DnaK and GrpE, in the DNA replication of plasmids through activation of initiation proteins. In Streptococcus agalactiae serotype III (strain NEM316), this protein is Chaperone protein DnaJ.